The following is a 452-amino-acid chain: Tissue alpha-L-fucosidase (452 aa).

Residues 1 to 17 form the signal peptide; sequence MLLLLLLLLVAAAQAVA. N-linked (GlcNAc...) asparagine glycans are attached at residues Asn227, Asn254, Asn368, and Asn378.

The protein belongs to the glycosyl hydrolase 29 family. In terms of assembly, homotetramer.

The protein localises to the lysosome. It carries out the reaction an alpha-L-fucoside + H2O = L-fucose + an alcohol. The enzyme catalyses a neolactoside IV(2)-alpha-Fuc-nLc4Cer(d18:1(4E)) + H2O = a neolactoside nLc4Cer(d18:1(4E)) + L-fucose. It catalyses the reaction a neolactoside IV(2)-alpha-Fuc-nLc4Cer(d18:0) + H2O = a neolactoside nLc4Cer(d18:0) + L-fucose. Alpha-L-fucosidase is responsible for hydrolyzing the alpha-1,6-linked fucose joined to the reducing-end N-acetylglucosamine of the carbohydrate moieties of glycoproteins. The protein is Tissue alpha-L-fucosidase (Fuca1) of Mus musculus (Mouse).